The sequence spans 406 residues: E3 ubiquitin-protein ligase RING1 (406 aa).

Thr-24 carries the post-translational modification Phosphothreonine. Residues 30-234 are necessary for transcriptional repression; that stretch reads MDGTEIAVSP…GGAGSEDSGD (205 aa). Residue Ser-38 is modified to Phosphoserine. The RING-type zinc finger occupies 48–88; it reads CPICLDMLKNTMTTKECLHRFCSDCIVTALRSGNKECPTCR. A phosphoserine mark is found at Ser-140, Ser-187, and Ser-190. 2 disordered regions span residues 148 to 263 and 309 to 354; these read QAMH…GEIE and QQQE…PSLE. Over residues 175–187 the composition is skewed to acidic residues; sequence EPGEGEGDGEDVS. Positions 201–204 match the Nuclear localization signal motif; sequence KRPR. Positions 205 to 228 are enriched in gly residues; that stretch reads GGGAGGSSVGTGGGGTGGVGGGAG. Phosphothreonine occurs at positions 215 and 220. 2 positions are modified to phosphoserine: Ser-229 and Ser-232. The tract at residues 230–406 is necessary for interaction with CBX2; it reads EDSGDRGGTL…LCYAPTKDPK (177 aa). Gly residues predominate over residues 235-244; it reads RGGTLGGGTL. Over residues 246-258 the composition is skewed to pro residues; it reads PPSPPGAPSPPEP. 2 positions are modified to phosphoserine: Ser-248 and Ser-254. The span at 315 to 343 shows a compositional bias: gly residues; sequence EPGGPGGGASDTGGPDGCGGEGGGAGGGD.

In terms of assembly, component of chromatin-associated Polycomb (PcG) complexes. Interacts with BMI1. Part of the E2F6.com-1 complex in G0 phase composed of E2F6, MGA, MAX, TFDP1, CBX3, BAT8, EUHMTASE1, RING1, RNF2/RING2 MBLR, L3MBTL2 and YAF2. Interacts with CBX2 and PCGF6. Component of a PRC1-like complex. Component of repressive BCOR complex containing Polycomb group subcomplex at least composed of RYBP, PCGF1, BCOR and RNF2/RING2. Interacts with PCGF2, RNF2; CBX6, CBX7 and CBX8. Interacts with PHC2. Interacts with MN1. Interacts with USP26.

It localises to the nucleus. It is found in the nucleus speckle. It carries out the reaction S-ubiquitinyl-[E2 ubiquitin-conjugating enzyme]-L-cysteine + [acceptor protein]-L-lysine = [E2 ubiquitin-conjugating enzyme]-L-cysteine + N(6)-ubiquitinyl-[acceptor protein]-L-lysine.. Its pathway is protein modification; protein ubiquitination. Functionally, constitutes one of the E3 ubiquitin-protein ligases that mediate monoubiquitination of 'Lys-119' of histone H2A, thereby playing a central role in histone code and gene regulation. H2A 'Lys-119' ubiquitination gives a specific tag for epigenetic transcriptional repression and participates in X chromosome inactivation of female mammals. Essential component of a Polycomb group (PcG) multiprotein PRC1-like complex, a complex class required to maintain the transcriptionally repressive state of many genes, including Hox genes, throughout development. PcG PRC1 complex acts via chromatin remodeling and modification of histones, rendering chromatin heritably changed in its expressibility. Compared to RNF2/RING2, it does not have the main E3 ubiquitin ligase activity on histone H2A, and it may rather act as a modulator of RNF2/RING2 activity. In Homo sapiens (Human), this protein is E3 ubiquitin-protein ligase RING1.